A 243-amino-acid chain; its full sequence is DNA repair protein RecO (243 aa).

The protein belongs to the RecO family.

Its function is as follows. Involved in DNA repair and RecF pathway recombination. The protein is DNA repair protein RecO of Vibrio vulnificus (strain CMCP6).